A 102-amino-acid chain; its full sequence is Large ribosomal subunit protein uL23 (102 aa).

Belongs to the universal ribosomal protein uL23 family. In terms of assembly, part of the 50S ribosomal subunit. Contacts protein L29, and trigger factor when it is bound to the ribosome.

Its function is as follows. One of the early assembly proteins it binds 23S rRNA. One of the proteins that surrounds the polypeptide exit tunnel on the outside of the ribosome. Forms the main docking site for trigger factor binding to the ribosome. In Paramagnetospirillum magneticum (strain ATCC 700264 / AMB-1) (Magnetospirillum magneticum), this protein is Large ribosomal subunit protein uL23.